We begin with the raw amino-acid sequence, 157 residues long: Transcriptional repressor NrdR (157 aa).

The interval 1-22 (MKCPYCSSPDSRVINSRPSDDG) is disordered. A zinc finger spans residues 3–34 (CPYCSSPDSRVINSRPSDDGASIRRRRECLTC). Positions 8–17 (SPDSRVINSR) are enriched in polar residues. One can recognise an ATP-cone domain in the interval 49-136 (LMVVKRSGVR…VYRDFDSLER (88 aa)).

It belongs to the NrdR family. It depends on Zn(2+) as a cofactor.

Negatively regulates transcription of bacterial ribonucleotide reductase nrd genes and operons by binding to NrdR-boxes. In Deinococcus radiodurans (strain ATCC 13939 / DSM 20539 / JCM 16871 / CCUG 27074 / LMG 4051 / NBRC 15346 / NCIMB 9279 / VKM B-1422 / R1), this protein is Transcriptional repressor NrdR.